Consider the following 443-residue polypeptide: MECLRSLPCLLPRAMRLPRRTLCALALDVTSVGPPVAACGRRANLIGRSRAAQLCGPDRLRVAGEVHRFRTSDVSQATLASVAPVFTVTKFDKQGNVTSFERKKTELYQELGLQARDLRFQHVMSITVRNNRIIMRMEYLKAVITPECLLILDYRNLNLEQWLFRELPSQLSGEGQLVTYPLPFEFRAIEALLQYWINTLQGKLSILQPLILETLDALVDPKHSSVDRSKLHILLQNGKSLSELETDIKIFKESILEILDEEELLEELCVSKWSDPQVFEKSSAGIDHAEEMELLLENYYRLADDLSNAARELRVLIDDSQSIIFINLDSHRNVMMRLNLQLTMGTFSLSLFGLMGVAFGMNLESSLEEDHRIFWLITGIMFMGSGLIWRRLLSFLGRQLEAPLPPMMASLPKKTLLADRSMELKNSLRLDGLGSGRSILTNR.

The N-terminal 49 residues, 1-49 (MECLRSLPCLLPRAMRLPRRTLCALALDVTSVGPPVAACGRRANLIGRS), are a transit peptide targeting the mitochondrion. The Mitochondrial matrix segment spans residues 50–339 (RAAQLCGPDR…SHRNVMMRLN (290 aa)). 5 residues coordinate Mg(2+): Glu-243, Thr-246, Asp-247, Glu-312, and Asp-329. A helical membrane pass occupies residues 340–359 (LQLTMGTFSLSLFGLMGVAF). Residues Gly-360 and Asn-362 each contribute to the Mg(2+) site. A GMN motif motif is present at residues 360-362 (GMN). Residues 360-370 (GMNLESSLEED) lie on the Mitochondrial intermembrane side of the membrane. The chain crosses the membrane as a helical span at residues 371 to 401 (HRIFWLITGIMFMGSGLIWRRLLSFLGRQLE). At 402–443 (APLPPMMASLPKKTLLADRSMELKNSLRLDGLGSGRSILTNR) the chain is on the mitochondrial matrix side.

This sequence belongs to the CorA metal ion transporter (MIT) (TC 1.A.35) family. As to quaternary structure, homopentamer.

The protein resides in the mitochondrion inner membrane. Its activity is regulated as follows. May be regulated by calcium ions. In terms of biological role, magnesium transporter that mediates the influx of magnesium into the mitochondrial matrix and regulates magnesium metabolism. Also permeable to calcium, sodium and potassium ions. Required for normal expression of the mitochondrial respiratory complex I subunits. May play a role in maintaining the inner mitochondrial membrane potential. In Homo sapiens (Human), this protein is Magnesium transporter MRS2 homolog, mitochondrial (MRS2).